The chain runs to 527 residues: Bifunctional purine biosynthesis protein PurH (527 aa).

The MGS-like domain maps to 1–149 (MTADLLPVRR…KNFARVAVAT (149 aa)).

It belongs to the PurH family.

The catalysed reaction is (6R)-10-formyltetrahydrofolate + 5-amino-1-(5-phospho-beta-D-ribosyl)imidazole-4-carboxamide = 5-formamido-1-(5-phospho-D-ribosyl)imidazole-4-carboxamide + (6S)-5,6,7,8-tetrahydrofolate. The enzyme catalyses IMP + H2O = 5-formamido-1-(5-phospho-D-ribosyl)imidazole-4-carboxamide. It participates in purine metabolism; IMP biosynthesis via de novo pathway; 5-formamido-1-(5-phospho-D-ribosyl)imidazole-4-carboxamide from 5-amino-1-(5-phospho-D-ribosyl)imidazole-4-carboxamide (10-formyl THF route): step 1/1. Its pathway is purine metabolism; IMP biosynthesis via de novo pathway; IMP from 5-formamido-1-(5-phospho-D-ribosyl)imidazole-4-carboxamide: step 1/1. This is Bifunctional purine biosynthesis protein PurH from Stenotrophomonas maltophilia (strain K279a).